The primary structure comprises 551 residues: Synapse-associated protein of 47 kDa (551 aa).

Disordered stretches follow at residues 20–72 and 117–198; these read AGDE…AGKR and AMPA…GQGK. Composition is skewed to low complexity over residues 26–59, 117–128, and 137–146; these read PAPT…AAAA, AMPAMPSIPSIP, and DGAEGAEGAV. Phosphoserine occurs at positions 178 and 182. Over residues 182 to 197 the composition is skewed to gly residues; the sequence is SGGGTPTGDEGQIGQG. A Phosphothreonine modification is found at T186. The BSD domain maps to 295–347; the sequence is VDFEFSYDTAYPTAIAIMAEDKALETMRFELVPKIITEENFWRNYFYRVSLII. Residues 360–391 form a disordered region; the sequence is VGQASSGEDANEVATKEKKSKTAEPAKGDSSV. Basic and acidic residues predominate over residues 373-386; sequence ATKEKKSKTAEPAK. A Phosphoserine modification is found at S433. The disordered stretch occupies residues 487–551; that stretch reads KDYEVVDEGG…DLIEDTDDLK (65 aa). Over residues 514 to 523 the composition is skewed to acidic residues; it reads DDTEADEDEP. Polar residues predominate over residues 524–535; that stretch reads TISNLRTRSTNN. Residue T530 is modified to Phosphothreonine. A compositionally biased stretch (acidic residues) spans 536-551; sequence DWEEYADLIEDTDDLK.

As to expression, expressed specifically in neurons and transported to synaptic terminals.

This is Synapse-associated protein of 47 kDa (Sap47) from Drosophila melanogaster (Fruit fly).